The chain runs to 295 residues: Nitrogenase iron protein (295 aa).

G11 to S18 provides a ligand contact to ATP. C99 is a binding site for [4Fe-4S] cluster. ADP-ribosylarginine; by dinitrogenase reductase ADP-ribosyltransferase is present on R102. C133 provides a ligand contact to [4Fe-4S] cluster.

Belongs to the NifH/BchL/ChlL family. As to quaternary structure, homodimer. Requires [4Fe-4S] cluster as cofactor. In terms of processing, the reversible ADP-ribosylation of Arg-102 inactivates the nitrogenase reductase and regulates nitrogenase activity.

The catalysed reaction is N2 + 8 reduced [2Fe-2S]-[ferredoxin] + 16 ATP + 16 H2O = H2 + 8 oxidized [2Fe-2S]-[ferredoxin] + 2 NH4(+) + 16 ADP + 16 phosphate + 6 H(+). Functionally, the key enzymatic reactions in nitrogen fixation are catalyzed by the nitrogenase complex, which has 2 components: the iron protein and the molybdenum-iron protein. The chain is Nitrogenase iron protein from Zymomonas mobilis subsp. mobilis (strain ATCC 31821 / ZM4 / CP4).